Consider the following 391-residue polypeptide: Ferrochelatase (391 aa).

Fe cation contacts are provided by histidine 196 and glutamate 281.

This sequence belongs to the ferrochelatase family.

The protein localises to the cytoplasm. It carries out the reaction heme b + 2 H(+) = protoporphyrin IX + Fe(2+). It functions in the pathway porphyrin-containing compound metabolism; protoheme biosynthesis; protoheme from protoporphyrin-IX: step 1/1. Its function is as follows. Catalyzes the ferrous insertion into protoporphyrin IX. This Prochlorococcus marinus (strain MIT 9215) protein is Ferrochelatase.